Here is a 541-residue protein sequence, read N- to C-terminus: Histone acetyltransferase ESA1 (541 aa).

Over residues 1-11 the composition is skewed to basic and acidic residues; sequence MAVAEIKKEKG. The tract at residues 1 to 31 is disordered; sequence MAVAEIKKEKGSSLSPEPSSPIQILSTEPDA. The segment covering 12–30 has biased composition (polar residues); sequence SSLSPEPSSPIQILSTEPD. The Tudor-knot domain occupies 47–97; the sequence is PGCKVHVSKDGEFRLAEILQEHIKKGRKVFYVHYQDFNKRLDEWIELDRID. Residues 111-154 are disordered; that stretch reads TKENKSKKKSKSKGQTKLSKNNTTANSTTGTPQPSDGQPIMGDD. Over residues 115-124 the composition is skewed to basic residues; that stretch reads KSKKKSKSKG. Residues 131–146 are compositionally biased toward polar residues; sequence NNTTANSTTGTPQPSD. An MYST-type HAT domain is found at 196-529; sequence ARVRNLSTII…LNPKLLHWTP (334 aa). The C2HC MYST-type; degenerate zinc-finger motif lies at 229 to 254; that stretch reads IYICDFTLSYFGSKKQFERFRSKCSM. The short motif at 279–300 is the ESA1-RPD3 motif element; sequence RTWCRNLCLLSKLFLDHKTLYY. Lys296 carries the N6-acetyllysine; by autocatalysis modification. Acetyl-CoA-binding positions include 337–341 and 346–352; these read ACILT and QKRGFGK. The active-site Proton donor/acceptor is the Glu372. Ser376 lines the acetyl-CoA pocket. Residues 413-438 are disordered; that stretch reads YDEAENGKDSSATPTPGPGSNASQSS.

The protein belongs to the MYST (SAS/MOZ) family. In terms of assembly, component of the NuA4 histone acetyltransferase complex. In terms of processing, autoacetylation at Lys-296 is required for proper function.

The protein localises to the nucleus. The protein resides in the chromosome. The catalysed reaction is L-lysyl-[histone] + acetyl-CoA = N(6)-acetyl-L-lysyl-[histone] + CoA + H(+). It catalyses the reaction L-lysyl-[protein] + acetyl-CoA = N(6)-acetyl-L-lysyl-[protein] + CoA + H(+). It carries out the reaction 2-hydroxyisobutanoyl-CoA + L-lysyl-[protein] = N(6)-(2-hydroxyisobutanoyl)-L-lysyl-[protein] + CoA + H(+). The enzyme catalyses (2E)-butenoyl-CoA + L-lysyl-[protein] = N(6)-(2E)-butenoyl-L-lysyl-[protein] + CoA + H(+). Catalytic component of the NuA4 histone acetyltransferase (HAT) complex which is involved in epigenetic transcriptional activation of selected genes principally by acetylation of nucleosomal histones H4, H3, H2B, H2A and H2A variant H2A.Z. Acetylates histone H4 to form H4K5ac, H4K8ac, H4K12ac and H4K16ac, histone H3 to form H3K14ac, and histone H2A to form H2AK4ac and H2AK7ac. The NuA4 complex is involved in the DNA damage response and is required for chromosome segregation. The NuA4 complex plays a direct role in repair of DNA double-strand breaks (DSBs) through homologous recombination. Recruitment to promoters depends on H3K4me. Also acetylates non-histone proteins. In addition to protein acetyltransferase, can use different acyl-CoA substrates, such as 2-hydroxyisobutanoyl-CoA (2-hydroxyisobutyryl-CoA) or (2E)-butenoyl-CoA (crotonyl-CoA), and is able to mediate protein 2-hydroxyisobutyrylation and crotonylation, respectively. The chain is Histone acetyltransferase ESA1 (ESA1) from Candida albicans (strain SC5314 / ATCC MYA-2876) (Yeast).